The sequence spans 294 residues: Kynurenine formamidase (294 aa).

Positions 1–14 (MSRWKDMNKDELER) are enriched in basic and acidic residues. The segment at 1–20 (MSRWKDMNKDELERQFSPSQ) is disordered. The HGGXW signature appears at 84–88 (HGGYW). The active-site Nucleophile is S153. Residues D236 and H269 contribute to the active site.

It belongs to the kynurenine formamidase family. As to quaternary structure, homodimer.

The protein localises to the cytoplasm. It localises to the cytosol. Its subcellular location is the nucleus. The catalysed reaction is N-formyl-L-kynurenine + H2O = L-kynurenine + formate + H(+). The protein operates within amino-acid degradation; L-tryptophan degradation via kynurenine pathway; L-kynurenine from L-tryptophan: step 2/2. In terms of biological role, catalyzes the hydrolysis of N-formyl-L-kynurenine to L-kynurenine, the second step in the kynurenine pathway of tryptophan degradation. Kynurenine may be further oxidized to nicotinic acid, NAD(H) and NADP(H). Required for elimination of toxic metabolites. This chain is Kynurenine formamidase (afmid), found in Salmo salar (Atlantic salmon).